The primary structure comprises 499 residues: Putative protease Do-like 12, mitochondrial (499 aa).

The transit peptide at 1–24 directs the protein to the mitochondrion; the sequence is MLFRSCVGMVSRYSRALLPTITIS. The segment at 94 to 259 is serine protease; sequence GGSGFAIAGK…IPTPIIRHFI (166 aa). Catalysis depends on charge relay system residues histidine 110, aspartate 144, and serine 222. Residues 272-356 enclose the PDZ domain; it reads GSLVLSCQSM…DENILVKVLR (85 aa).

This sequence belongs to the peptidase S1C family.

It is found in the mitochondrion matrix. In terms of biological role, putative serine protease. The chain is Putative protease Do-like 12, mitochondrial (DEGP12) from Arabidopsis thaliana (Mouse-ear cress).